The primary structure comprises 209 residues: A-type ATP synthase subunit D (209 aa).

This sequence belongs to the V-ATPase D subunit family. Has multiple subunits with at least A(3), B(3), C, D, E, F, H, I and proteolipid K(x).

Its subcellular location is the cell membrane. Its function is as follows. Component of the A-type ATP synthase that produces ATP from ADP in the presence of a proton gradient across the membrane. The protein is A-type ATP synthase subunit D of Methanosarcina acetivorans (strain ATCC 35395 / DSM 2834 / JCM 12185 / C2A).